We begin with the raw amino-acid sequence, 62 residues long: Small ribosomal subunit protein eS27 (62 aa).

The Zn(2+) site is built by Cys-17, Cys-20, Cys-36, and Cys-39. The C4-type zinc finger occupies 17–39 (CNDCENEQIIFGSASRKITCVVC).

This sequence belongs to the eukaryotic ribosomal protein eS27 family. Part of the 30S ribosomal subunit. Requires Zn(2+) as cofactor.

This Methanosarcina mazei (strain ATCC BAA-159 / DSM 3647 / Goe1 / Go1 / JCM 11833 / OCM 88) (Methanosarcina frisia) protein is Small ribosomal subunit protein eS27.